The chain runs to 184 residues: Photosystem I assembly protein Ycf4 (184 aa).

2 helical membrane-spanning segments follow: residues 22–42 and 57–77; these read FFWA…GTSS and IPFF…LFIS.

This sequence belongs to the Ycf4 family.

It localises to the plastid. It is found in the chloroplast thylakoid membrane. Its function is as follows. Seems to be required for the assembly of the photosystem I complex. This chain is Photosystem I assembly protein Ycf4, found in Ceratophyllum demersum (Rigid hornwort).